The chain runs to 445 residues: Histidinol dehydrogenase (445 aa).

NAD(+) contacts are provided by tyrosine 144, glutamine 205, and asparagine 228. Residues serine 251, glutamine 273, and histidine 276 each contribute to the substrate site. Zn(2+)-binding residues include glutamine 273 and histidine 276. Catalysis depends on proton acceptor residues glutamate 341 and histidine 342. Positions 342, 375, 429, and 434 each coordinate substrate. Aspartate 375 is a binding site for Zn(2+). Histidine 434 is a binding site for Zn(2+).

Belongs to the histidinol dehydrogenase family. It depends on Zn(2+) as a cofactor.

The catalysed reaction is L-histidinol + 2 NAD(+) + H2O = L-histidine + 2 NADH + 3 H(+). It participates in amino-acid biosynthesis; L-histidine biosynthesis; L-histidine from 5-phospho-alpha-D-ribose 1-diphosphate: step 9/9. Functionally, catalyzes the sequential NAD-dependent oxidations of L-histidinol to L-histidinaldehyde and then to L-histidine. The polypeptide is Histidinol dehydrogenase (Cupriavidus pinatubonensis (strain JMP 134 / LMG 1197) (Cupriavidus necator (strain JMP 134))).